A 252-amino-acid chain; its full sequence is Redox-sensing transcriptional repressor Rex (252 aa).

Positions 26–65 form a DNA-binding region, H-T-H motif; it reads LYLRALTALSERSVPTVSSEELAAAAGVNSAKLRKDFSYL. Residue 100–105 coordinates NAD(+); the sequence is GIGNLG. A disordered region spans residues 222–252; the sequence is EAAAEGAIPAAASKESADKGPDGDVPAVMPA.

This sequence belongs to the transcriptional regulatory Rex family. As to quaternary structure, homodimer.

Its subcellular location is the cytoplasm. Its function is as follows. Modulates transcription in response to changes in cellular NADH/NAD(+) redox state. In Streptomyces avermitilis (strain ATCC 31267 / DSM 46492 / JCM 5070 / NBRC 14893 / NCIMB 12804 / NRRL 8165 / MA-4680), this protein is Redox-sensing transcriptional repressor Rex.